Here is a 288-residue protein sequence, read N- to C-terminus: Damage-control phosphatase AF_1104 (288 aa).

The Subfamily I CxxC motif motif lies at 7 to 10 (CPSC). Aspartate 160, asparagine 161, and aspartate 194 together coordinate Mn(2+). Positions 247-250 (ANYE) match the Subfamily I GNFE-like motif motif. The Subfamily I KC motif signature appears at 267–268 (KC).

The protein belongs to the damage-control phosphatase family. Nucleotides phosphatase I subfamily. It depends on [2Fe-2S] cluster as a cofactor. The cofactor is Mn(2+). Ni(2+) is required as a cofactor.

Its function is as follows. Metal-dependent phosphatase with probable damage-control functions. Could hydrolyze oxidatively damaged purine nucleotides or their biosynthetic intermediates. This is Damage-control phosphatase AF_1104 from Archaeoglobus fulgidus (strain ATCC 49558 / DSM 4304 / JCM 9628 / NBRC 100126 / VC-16).